The sequence spans 452 residues: Exodeoxyribonuclease 7 large subunit (452 aa).

Belongs to the XseA family. In terms of assembly, heterooligomer composed of large and small subunits.

Its subcellular location is the cytoplasm. It catalyses the reaction Exonucleolytic cleavage in either 5'- to 3'- or 3'- to 5'-direction to yield nucleoside 5'-phosphates.. In terms of biological role, bidirectionally degrades single-stranded DNA into large acid-insoluble oligonucleotides, which are then degraded further into small acid-soluble oligonucleotides. In Bacillus cereus (strain 03BB102), this protein is Exodeoxyribonuclease 7 large subunit.